A 302-amino-acid chain; its full sequence is Urease accessory protein UreD 2 (302 aa).

This sequence belongs to the UreD family. In terms of assembly, ureD, UreF and UreG form a complex that acts as a GTP-hydrolysis-dependent molecular chaperone, activating the urease apoprotein by helping to assemble the nickel containing metallocenter of UreC. The UreE protein probably delivers the nickel.

It is found in the cytoplasm. Required for maturation of urease via the functional incorporation of the urease nickel metallocenter. The sequence is that of Urease accessory protein UreD 2 from Brucella melitensis biotype 1 (strain ATCC 23456 / CCUG 17765 / NCTC 10094 / 16M).